A 104-amino-acid polypeptide reads, in one-letter code: Putative heat shock protein PS1 (104 aa).

Residues asparagine 11 and asparagine 18 are each glycosylated (N-linked (GlcNAc...) asparagine). ATP is bound at residue asparagine 18.

This sequence belongs to the heat shock protein 90 family. Homodimer.

It is found in the cytoplasm. In terms of biological role, putative molecular chaperone that may promote the maturation, structural maintenance and proper regulation of specific target proteins. This Pinus strobus (Eastern white pine) protein is Putative heat shock protein PS1.